A 71-amino-acid chain; its full sequence is Antitoxin ParD2 (71 aa).

Antitoxin component of a type II toxin-antitoxin (TA) system. This chain is Antitoxin ParD2 (parD2), found in Mycobacterium tuberculosis (strain CDC 1551 / Oshkosh).